The sequence spans 283 residues: NifU-like protein 4, mitochondrial (283 aa).

Residues 1 to 48 constitute a mitochondrion transit peptide; it reads MKGIARLVTSLSRIGGRKVVSGTSTVTSSSSSSLLLSRRSLFISATNL.

The protein belongs to the NifU family. As to expression, predominantly expressed in roots.

The protein localises to the mitochondrion. Its function is as follows. Molecular scaffold for [Fe-S] cluster assembly of mitochondrial iron-sulfur proteins. This is NifU-like protein 4, mitochondrial (NIFU4) from Arabidopsis thaliana (Mouse-ear cress).